We begin with the raw amino-acid sequence, 72 residues long: Translation initiation factor IF-1 2 (72 aa).

The S1-like domain maps to 1 to 72 (MAKEDVIEMQ…TKGRIVFRTK (72 aa)).

Belongs to the IF-1 family. In terms of assembly, component of the 30S ribosomal translation pre-initiation complex which assembles on the 30S ribosome in the order IF-2 and IF-3, IF-1 and N-formylmethionyl-tRNA(fMet); mRNA recruitment can occur at any time during PIC assembly.

It localises to the cytoplasm. One of the essential components for the initiation of protein synthesis. Stabilizes the binding of IF-2 and IF-3 on the 30S subunit to which N-formylmethionyl-tRNA(fMet) subsequently binds. Helps modulate mRNA selection, yielding the 30S pre-initiation complex (PIC). Upon addition of the 50S ribosomal subunit IF-1, IF-2 and IF-3 are released leaving the mature 70S translation initiation complex. The sequence is that of Translation initiation factor IF-1 2 from Azoarcus sp. (strain BH72).